We begin with the raw amino-acid sequence, 124 residues long: MIGVTLAVAVGGALGCLLRFATSNWISAHWPQHFYAATLAVNIAGCLLIGYLYGQFLLRPEVPLALRAGLIAGFLGGLTTFSSFSLDTLRLLESGQAPLAFSYLAFSVLGGLLATWAGLILTKL.

4 helical membrane passes run M1 to A21, F34 to G54, V62 to S82, and F101 to L121. G76 and T79 together coordinate Na(+).

Belongs to the fluoride channel Fluc/FEX (TC 1.A.43) family.

The protein resides in the cell inner membrane. It carries out the reaction fluoride(in) = fluoride(out). With respect to regulation, na(+) is not transported, but it plays an essential structural role and its presence is essential for fluoride channel function. Functionally, fluoride-specific ion channel. Important for reducing fluoride concentration in the cell, thus reducing its toxicity. The polypeptide is Fluoride-specific ion channel FluC (Azotobacter vinelandii (strain DJ / ATCC BAA-1303)).